Reading from the N-terminus, the 336-residue chain is Gibberellin 2-beta-dioxygenase 7 (336 aa).

The Fe2OG dioxygenase domain occupies 191–291 (LENSFLRLNK…RMSIAFFVCP (101 aa)). Residues His-216, Asp-218, and His-272 each coordinate Fe cation. The active site involves Arg-282. Arg-282 contacts 2-oxoglutarate.

It belongs to the iron/ascorbate-dependent oxidoreductase family. GA2OX subfamily. Fe(2+) is required as a cofactor.

It catalyses the reaction gibberellin A1 + 2-oxoglutarate + O2 = gibberellin A8 + succinate + CO2. The protein operates within plant hormone biosynthesis; gibberellin biosynthesis. In terms of biological role, catalyzes the 2-beta-hydroxylation of gibberellins (GA) precursors, rendering them unable to be converted to active GAs. Hydroxylates the C20-GA GA12 and GA53, but is not active on C19-GAs, like GA1, GA4, GA9 and GA20. This is Gibberellin 2-beta-dioxygenase 7 (GA2OX7) from Arabidopsis thaliana (Mouse-ear cress).